Here is a 445-residue protein sequence, read N- to C-terminus: Proline--tRNA ligase (445 aa).

The protein belongs to the class-II aminoacyl-tRNA synthetase family. ProS type 2 subfamily. Homodimer.

Its subcellular location is the cytoplasm. It catalyses the reaction tRNA(Pro) + L-proline + ATP = L-prolyl-tRNA(Pro) + AMP + diphosphate. In terms of biological role, catalyzes the attachment of proline to tRNA(Pro) in a two-step reaction: proline is first activated by ATP to form Pro-AMP and then transferred to the acceptor end of tRNA(Pro). In Cereibacter sphaeroides (strain ATCC 17029 / ATH 2.4.9) (Rhodobacter sphaeroides), this protein is Proline--tRNA ligase.